A 372-amino-acid polypeptide reads, in one-letter code: GDP-mannose 4,6-dehydratase (372 aa).

Residues 8–13 (GITGQD), 63–64 (DL), 85–89 (LGAQS), and Y100 contribute to the NADP(+) site. Residue T132 is part of the active site. Catalysis depends on nucleophile residues E134 and Y156. The NADP(+) site is built by K160, H186, and R191.

This sequence belongs to the NAD(P)-dependent epimerase/dehydratase family. GDP-mannose 4,6-dehydratase subfamily. NADP(+) is required as a cofactor.

It carries out the reaction GDP-alpha-D-mannose = GDP-4-dehydro-alpha-D-rhamnose + H2O. It participates in bacterial outer membrane biogenesis; LPS O-antigen biosynthesis. The protein operates within nucleotide-sugar biosynthesis; GDP-L-fucose biosynthesis via de novo pathway; GDP-L-fucose from GDP-alpha-D-mannose: step 1/2. In terms of biological role, catalyzes the conversion of GDP-D-mannose to GDP-4-dehydro-6-deoxy-D-mannose. This chain is GDP-mannose 4,6-dehydratase, found in Yersinia enterocolitica serotype O:8 / biotype 1B (strain NCTC 13174 / 8081).